We begin with the raw amino-acid sequence, 694 residues long: Elongation factor G (694 aa).

Positions 12–286 (SKLRNIGIMA…AVVDYLPSPI (275 aa)) constitute a tr-type G domain. GTP-binding positions include 21 to 28 (AHIDAGKT), 85 to 89 (DTPGH), and 139 to 142 (NKMD).

It belongs to the TRAFAC class translation factor GTPase superfamily. Classic translation factor GTPase family. EF-G/EF-2 subfamily.

Its subcellular location is the cytoplasm. Its function is as follows. Catalyzes the GTP-dependent ribosomal translocation step during translation elongation. During this step, the ribosome changes from the pre-translocational (PRE) to the post-translocational (POST) state as the newly formed A-site-bound peptidyl-tRNA and P-site-bound deacylated tRNA move to the P and E sites, respectively. Catalyzes the coordinated movement of the two tRNA molecules, the mRNA and conformational changes in the ribosome. This Pseudothermotoga lettingae (strain ATCC BAA-301 / DSM 14385 / NBRC 107922 / TMO) (Thermotoga lettingae) protein is Elongation factor G.